A 279-amino-acid polypeptide reads, in one-letter code: Large ribosomal subunit protein uL2 (279 aa).

Disordered stretches follow at residues 34-55 (LAPL…RHKG) and 221-279 (RGMA…RKAK). A compositionally biased stretch (basic residues) spans 40 to 55 (SGGRNRAGRITSRHKG). A compositionally biased stretch (gly residues) spans 232–242 (MGGGEGRSKSG). Residues 259–279 (LKTRNKKKASSKLIVRGRKAK) are compositionally biased toward basic residues.

It belongs to the universal ribosomal protein uL2 family. In terms of assembly, part of the 50S ribosomal subunit. Forms a bridge to the 30S subunit in the 70S ribosome.

Functionally, one of the primary rRNA binding proteins. Required for association of the 30S and 50S subunits to form the 70S ribosome, for tRNA binding and peptide bond formation. It has been suggested to have peptidyltransferase activity; this is somewhat controversial. Makes several contacts with the 16S rRNA in the 70S ribosome. The polypeptide is Large ribosomal subunit protein uL2 (Chlorobium phaeobacteroides (strain BS1)).